A 172-amino-acid polypeptide reads, in one-letter code: RNA silencing suppressor p19 (172 aa).

Over residues 1 to 20 the composition is skewed to basic and acidic residues; it reads MERAIQGNDAREQANSERWD. The segment at 1-38 is disordered; that stretch reads MERAIQGNDAREQANSERWDGGSGSSTSPFQLPDESPS.

The protein belongs to the tombusvirus protein p19 family. Homodimer.

Functionally, viral suppressor of RNA silencing which binds specifically to silencing RNAs (siRNAs). Acts as a molecular caliper to specifically select siRNAs based on the length of the duplex region of the RNA. This is RNA silencing suppressor p19 from Tomato bushy stunt virus (strain type) (TBSV).